The chain runs to 283 residues: 4-diphosphocytidyl-2-C-methyl-D-erythritol kinase (283 aa).

K12 is a catalytic residue. P94–S104 lines the ATP pocket. Residue D136 is part of the active site.

Belongs to the GHMP kinase family. IspE subfamily.

The enzyme catalyses 4-CDP-2-C-methyl-D-erythritol + ATP = 4-CDP-2-C-methyl-D-erythritol 2-phosphate + ADP + H(+). It functions in the pathway isoprenoid biosynthesis; isopentenyl diphosphate biosynthesis via DXP pathway; isopentenyl diphosphate from 1-deoxy-D-xylulose 5-phosphate: step 3/6. In terms of biological role, catalyzes the phosphorylation of the position 2 hydroxy group of 4-diphosphocytidyl-2C-methyl-D-erythritol. The sequence is that of 4-diphosphocytidyl-2-C-methyl-D-erythritol kinase from Acidovorax sp. (strain JS42).